A 397-amino-acid polypeptide reads, in one-letter code: Argininosuccinate synthase (397 aa).

An ATP-binding site is contributed by 8–16 (AYSGGLDTS). Tyr-87 serves as a coordination point for L-citrulline. ATP is bound at residue Gly-117. Residues Thr-119, Asn-123, and Asp-124 each coordinate L-aspartate. Asn-123 provides a ligand contact to L-citrulline. Arg-127, Ser-175, Glu-259, and Tyr-271 together coordinate L-citrulline.

This sequence belongs to the argininosuccinate synthase family. Type 1 subfamily. In terms of assembly, homotetramer.

It localises to the cytoplasm. It carries out the reaction L-citrulline + L-aspartate + ATP = 2-(N(omega)-L-arginino)succinate + AMP + diphosphate + H(+). The protein operates within amino-acid biosynthesis; L-arginine biosynthesis; L-arginine from L-ornithine and carbamoyl phosphate: step 2/3. The protein is Argininosuccinate synthase of Streptomyces griseus subsp. griseus (strain JCM 4626 / CBS 651.72 / NBRC 13350 / KCC S-0626 / ISP 5235).